Here is a 949-residue protein sequence, read N- to C-terminus: AP-1 complex subunit beta-1 (949 aa).

Position 318 is an N6-acetyllysine (K318). Y574 is subject to 3'-nitrotyrosine. A disordered region spans residues 592–623; that stretch reads SLPPRTASSESTESPEAAPAGAPASDQPDVIP. The segment covering 594–616 has biased composition (low complexity); it reads PPRTASSESTESPEAAPAGAPAS.

Belongs to the adaptor complexes large subunit family. Adaptor protein complex 1 (AP-1) is a heterotetramer composed of two large adaptins (gamma-type subunit AP1G1 and beta-type subunit AP1B1), a medium adaptin (mu-type subunit AP1M1 or AP1M2) and a small adaptin (sigma-type subunit AP1S1 or AP1S2 or AP1S3). In terms of processing, the N-terminus is blocked.

The protein resides in the golgi apparatus. It localises to the cytoplasmic vesicle. Its subcellular location is the clathrin-coated vesicle membrane. Its function is as follows. Subunit of clathrin-associated adaptor protein complex 1 that plays a role in protein sorting in the late-Golgi/trans-Golgi network (TGN) and/or endosomes. The AP complexes mediate both the recruitment of clathrin to membranes and the recognition of sorting signals within the cytosolic tails of transmembrane cargo molecules. The protein is AP-1 complex subunit beta-1 (Ap1b1) of Rattus norvegicus (Rat).